A 745-amino-acid polypeptide reads, in one-letter code: Phosphoribosylformylglycinamidine synthase subunit PurL (745 aa).

Residue His-47 is part of the active site. ATP is bound by residues Tyr-50 and Lys-90. A Mg(2+)-binding site is contributed by Glu-92. Substrate contacts are provided by residues 93–96 (SHNH) and Arg-115. Residue His-94 is the Proton acceptor of the active site. Mg(2+) is bound at residue Asp-116. Residue Gln-240 coordinates substrate. Mg(2+) is bound at residue Asp-268. 312–314 (ESQ) is a substrate binding site. Positions 501 and 538 each coordinate ATP. Position 539 (Asn-539) interacts with Mg(2+). Ser-541 contributes to the substrate binding site.

The protein belongs to the FGAMS family. In terms of assembly, monomer. Part of the FGAM synthase complex composed of 1 PurL, 1 PurQ and 2 PurS subunits.

The protein resides in the cytoplasm. It carries out the reaction N(2)-formyl-N(1)-(5-phospho-beta-D-ribosyl)glycinamide + L-glutamine + ATP + H2O = 2-formamido-N(1)-(5-O-phospho-beta-D-ribosyl)acetamidine + L-glutamate + ADP + phosphate + H(+). It functions in the pathway purine metabolism; IMP biosynthesis via de novo pathway; 5-amino-1-(5-phospho-D-ribosyl)imidazole from N(2)-formyl-N(1)-(5-phospho-D-ribosyl)glycinamide: step 1/2. Its function is as follows. Part of the phosphoribosylformylglycinamidine synthase complex involved in the purines biosynthetic pathway. Catalyzes the ATP-dependent conversion of formylglycinamide ribonucleotide (FGAR) and glutamine to yield formylglycinamidine ribonucleotide (FGAM) and glutamate. The FGAM synthase complex is composed of three subunits. PurQ produces an ammonia molecule by converting glutamine to glutamate. PurL transfers the ammonia molecule to FGAR to form FGAM in an ATP-dependent manner. PurS interacts with PurQ and PurL and is thought to assist in the transfer of the ammonia molecule from PurQ to PurL. The protein is Phosphoribosylformylglycinamidine synthase subunit PurL of Leptospira interrogans serogroup Icterohaemorrhagiae serovar copenhageni (strain Fiocruz L1-130).